We begin with the raw amino-acid sequence, 230 residues long: Metaxin-2 homolog (230 aa).

It belongs to the metaxin family. As to quaternary structure, associates with the mitochondrial contact site and cristae organizing system (MICOS) complex (also known as MINOS or MitOS complex).

The protein localises to the mitochondrion outer membrane. In terms of biological role, involved in transport of proteins into the mitochondrion. The chain is Metaxin-2 homolog (mtx-2) from Caenorhabditis elegans.